The chain runs to 357 residues: 3-isopropylmalate dehydrogenase (357 aa).

75-88 (GPKWEHLPPAEQPE) is a binding site for NAD(+). Substrate is bound by residues Arg96, Arg106, Arg135, and Asp224. Mg(2+) contacts are provided by Asp224, Asp248, and Asp252. 282-294 (GSAPDIAGQGIAN) is a binding site for NAD(+).

The protein belongs to the isocitrate and isopropylmalate dehydrogenases family. LeuB type 1 subfamily. Homodimer. The cofactor is Mg(2+). Mn(2+) serves as cofactor.

It localises to the cytoplasm. The enzyme catalyses (2R,3S)-3-isopropylmalate + NAD(+) = 4-methyl-2-oxopentanoate + CO2 + NADH. Its pathway is amino-acid biosynthesis; L-leucine biosynthesis; L-leucine from 3-methyl-2-oxobutanoate: step 3/4. Catalyzes the oxidation of 3-carboxy-2-hydroxy-4-methylpentanoate (3-isopropylmalate) to 3-carboxy-4-methyl-2-oxopentanoate. The product decarboxylates to 4-methyl-2 oxopentanoate. This is 3-isopropylmalate dehydrogenase from Desulfotalea psychrophila (strain LSv54 / DSM 12343).